A 111-amino-acid chain; its full sequence is Probable 4-amino-4-deoxy-L-arabinose-phosphoundecaprenol flippase subunit ArnE (111 aa).

Transmembrane regions (helical) follow at residues 36–56, 61–81, and 88–108; these read IVLW…LWLL, VPVG…TLAA, and PVSP…VILG. The region spanning 40-109 is the EamA domain; that stretch reads LGLALACLGL…IIGGIVILGS (70 aa).

This sequence belongs to the ArnE family. In terms of assembly, heterodimer of ArnE and ArnF.

It is found in the cell inner membrane. Its pathway is bacterial outer membrane biogenesis; lipopolysaccharide biosynthesis. Functionally, translocates 4-amino-4-deoxy-L-arabinose-phosphoundecaprenol (alpha-L-Ara4N-phosphoundecaprenol) from the cytoplasmic to the periplasmic side of the inner membrane. In Shigella flexneri, this protein is Probable 4-amino-4-deoxy-L-arabinose-phosphoundecaprenol flippase subunit ArnE.